Here is a 185-residue protein sequence, read N- to C-terminus: Elongation factor P (185 aa).

This sequence belongs to the elongation factor P family.

It is found in the cytoplasm. Its pathway is protein biosynthesis; polypeptide chain elongation. In terms of biological role, involved in peptide bond synthesis. Stimulates efficient translation and peptide-bond synthesis on native or reconstituted 70S ribosomes in vitro. Probably functions indirectly by altering the affinity of the ribosome for aminoacyl-tRNA, thus increasing their reactivity as acceptors for peptidyl transferase. This Moorella thermoacetica (strain ATCC 39073 / JCM 9320) protein is Elongation factor P.